The sequence spans 656 residues: Anion exchange transporter (656 aa).

At 1-75 (MTGAKRKKKS…LAFAVLSSVH (75 aa)) the chain is on the cytoplasmic side. A helical membrane pass occupies residues 76 to 96 (PVFGLYGSLFPAIIYAIFGMG). At 97–144 (HHVATGTFALTSLISANAVERIVPQNMQNLTTQSNTSVLGLSDFEMQR) the chain is on the extracellular side. Residues 145–165 (IHVAAAVSFLGGVIQVAMFVL) form a helical membrane-spanning segment. Residue Gln166 is a topological domain, cytoplasmic. Residues 167–187 (LGSATFVVTEPVISAMTTGAA) traverse the membrane as a helical segment. Residues 188–202 (THVVTSQVKYLLGMK) are Extracellular-facing. Residues 203–223 (MPYISGPLGFFYIYAYVFENI) form a helical membrane-spanning segment. Residues 224-227 (KSVR) are Cytoplasmic-facing. The helical transmembrane segment at 228–248 (LEALLLSLLSIVVLVLVKELN) threads the bilayer. Topologically, residues 249-254 (EQFKRK) are extracellular. Residues 255 to 275 (IKVVLPVDLVLIIAASFACYC) traverse the membrane as a helical segment. Over 276 to 306 (TNMENTYGLEVVGHIPQGIPSPRAPPMNILS) the chain is Cytoplasmic. Residues 307–327 (AVITEAFGVALVGYVASLALA) form a helical membrane-spanning segment. The Extracellular segment spans residues 328–343 (QGSAKKFKYSIDDNQE). A helical membrane pass occupies residues 344 to 364 (FLAHGLSNIVSSFFFCIPSAA). Residues 365 to 383 (AMGRTAGLYSTGAKTQVAC) are Cytoplasmic-facing. A run of 2 helical transmembrane segments spans residues 384–404 (LISC…LYWL) and 405–425 (PMCV…IQFR). Over 426-448 (DLKKYWNVDKIDWGIWVSTYVFT) the chain is Extracellular. Residues 449 to 469 (ICFAANVGLLFGVVCTIAIVI) traverse the membrane as a helical segment. Over 470–656 (GRFPRAMTVS…LSKLSDHSEV (187 aa)) the chain is Cytoplasmic. Positions 492–641 (TEMDSETLQQ…ESVSAAISHI (150 aa)) constitute an STAS domain. Residues 641 to 656 (IHSNKNLSKLSDHSEV) form a membrane targeting region.

Belongs to the SLC26A/SulP transporter (TC 2.A.53) family. Expressed in the thyroid gland (at protein level). Expressed in tonsillar high endothelial venule endothelial cells (HEVEC), placenta and in testis, expressed in a subgroup of basal cells in the epididymal ducts.

It is found in the basolateral cell membrane. Its subcellular location is the recycling endosome membrane. It localises to the apical cell membrane. The protein localises to the lateral cell membrane. The catalysed reaction is chloride(in) = chloride(out). It carries out the reaction iodide(out) = iodide(in). It catalyses the reaction bromide(in) = bromide(out). The enzyme catalyses oxalate(in) = oxalate(out). The catalysed reaction is nitrate(in) = nitrate(out). It carries out the reaction sulfate(in) = sulfate(out). It catalyses the reaction thiocyanate(in) = thiocyanate(out). The enzyme catalyses D-gluconate(in) = D-gluconate(out). The catalysed reaction is hydrogencarbonate(in) = hydrogencarbonate(out). It carries out the reaction hydrogencarbonate(in) + chloride(out) = hydrogencarbonate(out) + chloride(in). Its activity is regulated as follows. Is active at both alkaline and acidic pH. Activity is inhibited by 4,4'-Di-isothiocyanatostilbene-2,2'-disulfonic acid (DIDS - an inhibitor of several anion channels and transporters). Its function is as follows. Acts as an anion channel mediating the transport of chloride, sulfate and oxalate ions. Mediates the transport of bromide, iodide, nitrate, gluconate, thiocyanate and bicarbonate ions. Its permeability towards bicarbonate is weak and increases when pH is above 7. Mediates thiocyanate transport in retinal pigment epithelium cells. Mediates iodide transport in the thyroid gland, playing an important role in the synthesis of thyroid hormones and the maintenance of thyroid function. Although it is an anion channel, according to PubMed:12736153 and PubMed:32119864 it has been shown to exhibit chloride-bicarbonate exchanger activity. In Homo sapiens (Human), this protein is Anion exchange transporter.